A 171-amino-acid polypeptide reads, in one-letter code: Plastocyanin minor isoform, chloroplastic (171 aa).

The Plastocyanin-like domain maps to 73-171 (MEVLLGSDDG…AGMVGKLTVK (99 aa)). Cu cation is bound by residues histidine 109, cysteine 156, histidine 159, and methionine 164.

The protein belongs to the plastocyanin family. It depends on Cu(2+) as a cofactor.

It localises to the plastid. The protein resides in the chloroplast thylakoid membrane. In terms of biological role, participates in electron transfer between P700 and the cytochrome b6-f complex in photosystem I. Seems to be a minor plastocyanin in Arabidopsis. This is Plastocyanin minor isoform, chloroplastic (PETE) from Arabidopsis thaliana (Mouse-ear cress).